The primary structure comprises 252 residues: 5'-nucleotidase SurE (252 aa).

Asp8, Asp9, Ser39, and Asn91 together coordinate a divalent metal cation.

This sequence belongs to the SurE nucleotidase family. The cofactor is a divalent metal cation.

Its subcellular location is the cytoplasm. It catalyses the reaction a ribonucleoside 5'-phosphate + H2O = a ribonucleoside + phosphate. Nucleotidase that shows phosphatase activity on nucleoside 5'-monophosphates. The sequence is that of 5'-nucleotidase SurE from Legionella pneumophila (strain Corby).